The following is a 419-amino-acid chain: UDP-N-acetylglucosamine 1-carboxyvinyltransferase (419 aa).

22 to 23 is a phosphoenolpyruvate binding site; it reads KN. Arg-95 contacts UDP-N-acetyl-alpha-D-glucosamine. Residue Cys-119 is the Proton donor of the active site. Cys-119 bears the 2-(S-cysteinyl)pyruvic acid O-phosphothioketal mark. Residues 164 to 167, Asp-308, and Ile-330 each bind UDP-N-acetyl-alpha-D-glucosamine; that span reads KVSV.

This sequence belongs to the EPSP synthase family. MurA subfamily.

The protein localises to the cytoplasm. The enzyme catalyses phosphoenolpyruvate + UDP-N-acetyl-alpha-D-glucosamine = UDP-N-acetyl-3-O-(1-carboxyvinyl)-alpha-D-glucosamine + phosphate. It functions in the pathway cell wall biogenesis; peptidoglycan biosynthesis. Cell wall formation. Adds enolpyruvyl to UDP-N-acetylglucosamine. This is UDP-N-acetylglucosamine 1-carboxyvinyltransferase from Rickettsia africae (strain ESF-5).